Consider the following 75-residue polypeptide: Sperm-specific protein PL-I (75 aa).

One can recognise an H15 domain in the interval 2–74 (GSSGMMSMVA…GSAGWVLVPK (73 aa)).

It belongs to the histone H1/H5 family. In terms of tissue distribution, sperm.

The protein resides in the nucleus. It localises to the chromosome. Its function is as follows. Linker histones are implicated in chromatin remodeling and/or transcriptional regulation during spermiogenesis, the process of spermatid maturation into spermatozoa. The polypeptide is Sperm-specific protein PL-I (Spisula solidissima (Atlantic surf-clam)).